The following is a 51-amino-acid chain: UPF0181 protein VVA0806 (51 aa).

The protein belongs to the UPF0181 family.

The protein is UPF0181 protein VVA0806 of Vibrio vulnificus (strain YJ016).